A 130-amino-acid chain; its full sequence is Fluoride-specific ion channel FluC (130 aa).

4 consecutive transmembrane segments (helical) span residues 3 to 23 (FVFL…YFVG), 39 to 59 (GTFS…HLAV), 67 to 87 (FGIF…SYGL), and 102 to 122 (VSYA…GWFL). Positions 77 and 80 each coordinate Na(+).

This sequence belongs to the fluoride channel Fluc/FEX (TC 1.A.43) family.

The protein resides in the cell inner membrane. The catalysed reaction is fluoride(in) = fluoride(out). Its activity is regulated as follows. Na(+) is not transported, but it plays an essential structural role and its presence is essential for fluoride channel function. In terms of biological role, fluoride-specific ion channel. Important for reducing fluoride concentration in the cell, thus reducing its toxicity. The polypeptide is Fluoride-specific ion channel FluC (Helicobacter pylori (strain ATCC 700392 / 26695) (Campylobacter pylori)).